The sequence spans 346 residues: Small ribosomal subunit biogenesis GTPase RsgA (346 aa).

Residues 1–25 (MAKRKLTQNQTRRIQSNNAKTLHRH) are disordered. Polar residues predominate over residues 7–20 (TQNQTRRIQSNNAK). The region spanning 103-271 (ENEISRPDYY…LIDSPGIREF (169 aa)) is the CP-type G domain. GTP is bound by residues 159 to 162 (NKVD) and 213 to 221 (GQSGVGKSS). Positions 295, 300, 302, and 308 each coordinate Zn(2+).

The protein belongs to the TRAFAC class YlqF/YawG GTPase family. RsgA subfamily. In terms of assembly, monomer. Associates with 30S ribosomal subunit, binds 16S rRNA. Zn(2+) is required as a cofactor.

It is found in the cytoplasm. In terms of biological role, one of several proteins that assist in the late maturation steps of the functional core of the 30S ribosomal subunit. Helps release RbfA from mature subunits. May play a role in the assembly of ribosomal proteins into the subunit. Circularly permuted GTPase that catalyzes slow GTP hydrolysis, GTPase activity is stimulated by the 30S ribosomal subunit. The polypeptide is Small ribosomal subunit biogenesis GTPase RsgA (Haemophilus influenzae (strain ATCC 51907 / DSM 11121 / KW20 / Rd)).